An 882-amino-acid polypeptide reads, in one-letter code: Alanine--tRNA ligase (882 aa).

Residues histidine 576, histidine 580, cysteine 678, and histidine 682 each contribute to the Zn(2+) site.

Belongs to the class-II aminoacyl-tRNA synthetase family. Zn(2+) is required as a cofactor.

Its subcellular location is the cytoplasm. The enzyme catalyses tRNA(Ala) + L-alanine + ATP = L-alanyl-tRNA(Ala) + AMP + diphosphate. Functionally, catalyzes the attachment of alanine to tRNA(Ala) in a two-step reaction: alanine is first activated by ATP to form Ala-AMP and then transferred to the acceptor end of tRNA(Ala). Also edits incorrectly charged Ser-tRNA(Ala) and Gly-tRNA(Ala) via its editing domain. This is Alanine--tRNA ligase from Anaplasma marginale (strain St. Maries).